The sequence spans 31 residues: Ranatuerin-2 (31 aa).

A disulfide bridge links C23 with C28.

The protein belongs to the frog skin active peptide (FSAP) family. Ranatuerin subfamily. As to expression, expressed by the skin glands.

The protein resides in the secreted. In terms of biological role, antibacterial activity against Gram-positive bacterium S.aureus (MIC=60 uM). Shows no detectable hemolytic activity towards human erythrocytes. This chain is Ranatuerin-2, found in Aquarana catesbeiana (American bullfrog).